Consider the following 288-residue polypeptide: G1/S-specific cyclin-D2 (288 aa).

One can recognise a Cyclin N-terminal domain in the interval 26 to 151 (LQNLLTIEER…VLGKLKWNLA (126 aa)). Residues 264–288 (QHNGSKSVEDPDQATTPTDVRDVDL) are disordered. The residue at position 270 (Ser270) is a Phosphoserine. A Phosphothreonine modification is found at Thr279.

It belongs to the cyclin family. Cyclin D subfamily. In terms of assembly, interacts with either CDK4 or CDK6 protein kinase to form a serine/threonine kinase holoenzyme complex. The cyclin subunit imparts substrate specificity to the complex. In terms of processing, phosphorylation at Thr-279 by MAP kinases is required for ubiquitination and degradation by the DCX(AMBRA1) complex. Ubiquitinated by the DCX(AMBRA1) complex during the transition from G1 to S cell phase, leading to its degradation: ubiquitination is dependent on Thr-279 phosphorylation. The DCX(AMBRA1) complex represents the major regulator of CCND2 stability during the G1/S transition. Polyubiquitinated by the SCF(FBXL2) complex, leading to proteasomal degradation.

The protein localises to the nucleus. Its subcellular location is the cytoplasm. It is found in the nucleus membrane. Its function is as follows. Regulatory component of the cyclin D2-CDK4 (DC) complex that phosphorylates and inhibits members of the retinoblastoma (RB) protein family including RB1 and regulates the cell-cycle during G(1)/S transition. Phosphorylation of RB1 allows dissociation of the transcription factor E2F from the RB/E2F complex and the subsequent transcription of E2F target genes which are responsible for the progression through the G(1) phase. Hypophosphorylates RB1 in early G(1) phase. Cyclin D-CDK4 complexes are major integrators of various mitogenenic and antimitogenic signals. This Rattus norvegicus (Rat) protein is G1/S-specific cyclin-D2 (Ccnd2).